A 135-amino-acid chain; its full sequence is Small ribosomal subunit protein uS8 (135 aa).

The protein belongs to the universal ribosomal protein uS8 family. In terms of assembly, part of the 30S ribosomal subunit. Contacts proteins S5 and S12.

Functionally, one of the primary rRNA binding proteins, it binds directly to 16S rRNA central domain where it helps coordinate assembly of the platform of the 30S subunit. This chain is Small ribosomal subunit protein uS8, found in Salinispora arenicola (strain CNS-205).